A 235-amino-acid chain; its full sequence is Small ribosomal subunit protein uS3 (235 aa).

The KH type-2 domain occupies 39-107 (VRKFLNKELA…PAQINIAEVK (69 aa)). The disordered stretch occupies residues 215-235 (AQPEQQPADKPKKAPRGKGRK).

This sequence belongs to the universal ribosomal protein uS3 family. Part of the 30S ribosomal subunit. Forms a tight complex with proteins S10 and S14.

Functionally, binds the lower part of the 30S subunit head. Binds mRNA in the 70S ribosome, positioning it for translation. In Pasteurella multocida (strain Pm70), this protein is Small ribosomal subunit protein uS3.